Here is a 168-residue protein sequence, read N- to C-terminus: UPF0134 protein MPN_524 (168 aa).

The protein belongs to the UPF0134 family.

The polypeptide is UPF0134 protein MPN_524 (Mycoplasma pneumoniae (strain ATCC 29342 / M129 / Subtype 1) (Mycoplasmoides pneumoniae)).